The sequence spans 172 residues: Small ribosomal subunit protein uS5 (172 aa).

Positions 17–80 (LREKMISVNR…EQARRNMFKV (64 aa)) constitute an S5 DRBM domain.

The protein belongs to the universal ribosomal protein uS5 family. As to quaternary structure, part of the 30S ribosomal subunit. Contacts proteins S4 and S8.

Its function is as follows. With S4 and S12 plays an important role in translational accuracy. Located at the back of the 30S subunit body where it stabilizes the conformation of the head with respect to the body. In Burkholderia lata (strain ATCC 17760 / DSM 23089 / LMG 22485 / NCIMB 9086 / R18194 / 383), this protein is Small ribosomal subunit protein uS5.